A 79-amino-acid polypeptide reads, in one-letter code: Conotoxin Kt6.1 (79 aa).

The signal sequence occupies residues 1–22 (MKLTCVLIISVLFLTASQLITA). The propeptide occupies 23–47 (VYSRDKQQYRAARLRDEMRNLKGAR). 3 cysteine pairs are disulfide-bonded: Cys-49-Cys-62, Cys-56-Cys-67, and Cys-61-Cys-77. A 4-hydroxyproline mark is found at Pro-60 and Pro-63.

It belongs to the conotoxin O1 superfamily. In terms of tissue distribution, expressed by the venom duct.

The protein localises to the secreted. Ion channel inhibitor that inhibits the increase in intracellular calcium upon depolarization in DRG neurons. In vivo, both intraperitoneal and intracranial injections into mice induce hyperactivity. This chain is Conotoxin Kt6.1, found in Conus kintoki (Cone snail).